The sequence spans 124 residues: uncharacterized protein (124 aa).

The tract at residues 82-124 (SDLGIEGGERAQGQNAHSVHGPGLQTERGGSQLQMVGHPLREL) is disordered.

This is an uncharacterized protein from Human cytomegalovirus (strain AD169) (HHV-5).